The following is an 893-amino-acid chain: Protein translocase subunit SecA (893 aa).

ATP-binding positions include Gln-87, 105 to 109, and Asp-512; that span reads GEGKT. A compositionally biased stretch (basic and acidic residues) spans 840-849; sequence VEEQHRKSEE. The segment at 840 to 893 is disordered; the sequence is VEEQHRKSEEVPMDFQHQSASSPSEQAQTPRVGRNEPCPCGSGKKYKQCHGKLA. Residues 855-868 are compositionally biased toward polar residues; the sequence is QHQSASSPSEQAQT. Residues Cys-877, Cys-879, Cys-888, and His-889 each contribute to the Zn(2+) site. Residues 883-893 show a composition bias toward basic residues; the sequence is KKYKQCHGKLA.

The protein belongs to the SecA family. Monomer and homodimer. Part of the essential Sec protein translocation apparatus which comprises SecA, SecYEG and auxiliary proteins SecDF-YajC and YidC. It depends on Zn(2+) as a cofactor.

The protein localises to the cell inner membrane. It localises to the cytoplasm. It carries out the reaction ATP + H2O + cellular proteinSide 1 = ADP + phosphate + cellular proteinSide 2.. Functionally, part of the Sec protein translocase complex. Interacts with the SecYEG preprotein conducting channel. Has a central role in coupling the hydrolysis of ATP to the transfer of proteins into and across the cell membrane, serving both as a receptor for the preprotein-SecB complex and as an ATP-driven molecular motor driving the stepwise translocation of polypeptide chains across the membrane. This is Protein translocase subunit SecA from Colwellia psychrerythraea (strain 34H / ATCC BAA-681) (Vibrio psychroerythus).